The primary structure comprises 168 residues: Large ribosomal subunit protein uL5 (168 aa).

It belongs to the universal ribosomal protein uL5 family. In terms of assembly, part of the 50S ribosomal subunit; contacts the 5S rRNA and probably tRNA. Forms a bridge to the 30S subunit in the 70S ribosome.

This is one of the proteins that bind and probably mediate the attachment of the 5S RNA into the large ribosomal subunit, where it forms part of the central protuberance. In the 70S ribosome it contacts protein S13 of the 30S subunit (bridge B1b), connecting the 2 subunits; this bridge is implicated in subunit movement. May contact the P site tRNA; the 5S rRNA and some of its associated proteins might help stabilize positioning of ribosome-bound tRNAs. This chain is Large ribosomal subunit protein uL5, found in Methanospirillum hungatei JF-1 (strain ATCC 27890 / DSM 864 / NBRC 100397 / JF-1).